The chain runs to 156 residues: Eosinophil cationic-type ribonuclease 3 (156 aa).

The N-terminal stretch at 1 to 25 (MGPKLLESRLCLLLLLRLVLMLASC) is a signal peptide. The active-site Proton acceptor is histidine 38. Asparagine 41 carries N-linked (GlcNAc...) asparagine glycosylation. Disulfide bonds link cysteine 47/cysteine 106, cysteine 61/cysteine 119, cysteine 79/cysteine 134, and cysteine 86/cysteine 94. Position 62–66 (62–66 (KGLNT)) interacts with substrate. 3 N-linked (GlcNAc...) asparagine glycosylation sites follow: asparagine 89, asparagine 96, and asparagine 107. The Proton donor role is filled by histidine 151.

It belongs to the pancreatic ribonuclease family.

The chain is Eosinophil cationic-type ribonuclease 3 (Ear3) from Mus musculus (Mouse).